The following is a 297-amino-acid chain: MRLHFTKMQGAGNDFVVLDATRAPLALSAADYRFLGDRRFGVGADQILVVERSTTPGVDFRYRIFNGGSGDEVEQCGNGARCFARFVRDNGLSQQVRVKVETVNSLIELHVEADGRVTVDMNQPIFEHALIPFDSAGLSARPHNGHGNGFELWPLQLPGASLPSVDVAVLSMGNPHAVQRVHDVDTAPVAEIGPRVETHARFPRHVNAGFMQVMSRREVRLRVFERGAGETLACGTGACAAVVAGIRLGWLDPEVDVQTRGGLLTIAWAGLGHPVLMTGPAQTVFTGDIDLPTTSVQ.

Substrate-binding residues include Asn-13, Gln-46, and Asn-66. The Proton donor role is filled by Cys-76. Substrate is bound by residues 77-78, Asn-174, Asn-207, and 225-226; these read GN and ER. Cys-234 acts as the Proton acceptor in catalysis. Substrate is bound at residue 235-236; sequence GT.

The protein belongs to the diaminopimelate epimerase family. In terms of assembly, homodimer.

It localises to the cytoplasm. The enzyme catalyses (2S,6S)-2,6-diaminopimelate = meso-2,6-diaminopimelate. The protein operates within amino-acid biosynthesis; L-lysine biosynthesis via DAP pathway; DL-2,6-diaminopimelate from LL-2,6-diaminopimelate: step 1/1. Functionally, catalyzes the stereoinversion of LL-2,6-diaminopimelate (L,L-DAP) to meso-diaminopimelate (meso-DAP), a precursor of L-lysine and an essential component of the bacterial peptidoglycan. This Leptothrix cholodnii (strain ATCC 51168 / LMG 8142 / SP-6) (Leptothrix discophora (strain SP-6)) protein is Diaminopimelate epimerase.